The following is a 150-amino-acid chain: Ribonuclease pancreatic delta-type (150 aa).

The first 25 residues, 1 to 25, serve as a signal peptide directing secretion; sequence MGLEKSFILFSLLVLVLGWVQPSLG. Substrate is bound at residue Arg-35. The active-site Proton acceptor is His-37. 4 disulfide bridges follow: Cys-51/Cys-110, Cys-65/Cys-121, Cys-83/Cys-136, and Cys-90/Cys-98. Substrate-binding positions include 66-70 and Lys-91; that span reads KPVNT. Residue His-145 is the Proton donor of the active site.

It belongs to the pancreatic ribonuclease family. As to quaternary structure, monomer.

It is found in the secreted. The catalysed reaction is an [RNA] containing cytidine + H2O = an [RNA]-3'-cytidine-3'-phosphate + a 5'-hydroxy-ribonucleotide-3'-[RNA].. It catalyses the reaction an [RNA] containing uridine + H2O = an [RNA]-3'-uridine-3'-phosphate + a 5'-hydroxy-ribonucleotide-3'-[RNA].. Its function is as follows. Endonuclease that catalyzes the cleavage of RNA on the 3' side of pyrimidine nucleotides. Acts on single-stranded and double-stranded RNA. In Rattus tiomanicus (Malayan field rat), this protein is Ribonuclease pancreatic delta-type.